A 428-amino-acid polypeptide reads, in one-letter code: D-amino acid dehydrogenase (428 aa).

3-17 (VVILGSGVVGVASAY) contacts FAD.

This sequence belongs to the DadA oxidoreductase family. It depends on FAD as a cofactor.

The catalysed reaction is a D-alpha-amino acid + A + H2O = a 2-oxocarboxylate + AH2 + NH4(+). It participates in amino-acid degradation; D-alanine degradation; NH(3) and pyruvate from D-alanine: step 1/1. Oxidative deamination of D-amino acids. The protein is D-amino acid dehydrogenase of Burkholderia vietnamiensis (strain G4 / LMG 22486) (Burkholderia cepacia (strain R1808)).